We begin with the raw amino-acid sequence, 189 residues long: Peptidyl-tRNA hydrolase (189 aa).

Tyr14 contributes to the tRNA binding site. His19 acts as the Proton acceptor in catalysis. TRNA-binding residues include Tyr64, Asn66, and Asn112.

It belongs to the PTH family. Monomer.

It localises to the cytoplasm. The catalysed reaction is an N-acyl-L-alpha-aminoacyl-tRNA + H2O = an N-acyl-L-amino acid + a tRNA + H(+). Hydrolyzes ribosome-free peptidyl-tRNAs (with 1 or more amino acids incorporated), which drop off the ribosome during protein synthesis, or as a result of ribosome stalling. Its function is as follows. Catalyzes the release of premature peptidyl moieties from peptidyl-tRNA molecules trapped in stalled 50S ribosomal subunits, and thus maintains levels of free tRNAs and 50S ribosomes. In Clostridium botulinum (strain ATCC 19397 / Type A), this protein is Peptidyl-tRNA hydrolase.